The primary structure comprises 152 residues: Transmembrane protein 35B (152 aa).

Residues M1–A21 form the signal peptide. 3 consecutive transmembrane segments (helical) span residues A62–L82, I85–E105, and Y111–V131.

The protein belongs to the DoxX family.

The protein resides in the membrane. The sequence is that of Transmembrane protein 35B from Rattus norvegicus (Rat).